A 65-amino-acid polypeptide reads, in one-letter code: Large ribosomal subunit protein bL35 (65 aa).

The protein belongs to the bacterial ribosomal protein bL35 family.

The chain is Large ribosomal subunit protein bL35 from Alkalilimnicola ehrlichii (strain ATCC BAA-1101 / DSM 17681 / MLHE-1).